The chain runs to 91 residues: Sm-like protein LSM6A (91 aa).

A Sm domain is found at 14 to 86; it reads TPADFLKSIR…VLYISTVNMT (73 aa).

This sequence belongs to the snRNP Sm proteins family. In terms of assembly, component of the heptameric LSM1-LSM7 complex that forms a seven-membered ring structure with a donut shape. The LSM subunits are arranged in the order LSM1, LSM2, LSM3, LSM6, LSM5, LSM7 and LSM4. Component of the heptameric LSM2-LSM8 complex that forms a seven-membered ring structure with a donut shape. The LSM subunits are arranged in the order LSM8, LSM2, LSM3, LSM6, LSM5, LSM7 and LSM4. LSM6A subunit interacts only with its two neighboring subunits, LSM3A or LSM3B and LSM5. As to expression, expressed in roots, leaves, stems, flowers and siliques.

The protein localises to the cytoplasm. The protein resides in the nucleus. Functionally, component of LSM protein complexes, which are involved in RNA processing. Component of the cytoplasmic LSM1-LSM7 complex which is involved in mRNA degradation by promoting decapping and leading to accurate 5'-3' mRNA decay. The cytoplasmic LSM1-LSM7 complex regulates developmental gene expression by the decapping of specific development-related transcripts. Component of the nuclear LSM2-LSM8 complex which is involved splicing nuclear mRNAs. LSM2-LSM8 binds directly to the U6 small nuclear RNAs (snRNAs) and is essential for accurate splicing of selected development-related mRNAs through the stabilization of the spliceosomal U6 snRNA. Plays a critical role in the regulation of development-related gene expression. The polypeptide is Sm-like protein LSM6A (Arabidopsis thaliana (Mouse-ear cress)).